A 99-amino-acid polypeptide reads, in one-letter code: Nucleoid-associated protein LACR_0106 (99 aa).

This sequence belongs to the YbaB/EbfC family. Homodimer.

The protein resides in the cytoplasm. The protein localises to the nucleoid. Functionally, binds to DNA and alters its conformation. May be involved in regulation of gene expression, nucleoid organization and DNA protection. The polypeptide is Nucleoid-associated protein LACR_0106 (Lactococcus lactis subsp. cremoris (strain SK11)).